Consider the following 190-residue polypeptide: UPF0200 protein TGAM_0868 (190 aa).

7-14 (GMPGSGKS) is an ATP binding site.

It belongs to the UPF0200 family.

This is UPF0200 protein TGAM_0868 from Thermococcus gammatolerans (strain DSM 15229 / JCM 11827 / EJ3).